The primary structure comprises 508 residues: Photosystem II CP47 reaction center protein (508 aa).

A run of 6 helical transmembrane segments spans residues 21-36, 101-115, 140-156, 203-218, 237-252, and 457-472; these read AVHL…WAGS, IVLS…IWHW, GIHL…FGAF, IAAG…FHLS, VLSS…AFVV, and TFAL…HGAR.

This sequence belongs to the PsbB/PsbC family. PsbB subfamily. In terms of assembly, PSII is composed of 1 copy each of membrane proteins PsbA, PsbB, PsbC, PsbD, PsbE, PsbF, PsbH, PsbI, PsbJ, PsbK, PsbL, PsbM, PsbT, PsbX, PsbY, PsbZ, Psb30/Ycf12, at least 3 peripheral proteins of the oxygen-evolving complex and a large number of cofactors. It forms dimeric complexes. Requires Binds multiple chlorophylls. PSII binds additional chlorophylls, carotenoids and specific lipids. as cofactor.

It is found in the plastid. Its subcellular location is the chloroplast thylakoid membrane. In terms of biological role, one of the components of the core complex of photosystem II (PSII). It binds chlorophyll and helps catalyze the primary light-induced photochemical processes of PSII. PSII is a light-driven water:plastoquinone oxidoreductase, using light energy to abstract electrons from H(2)O, generating O(2) and a proton gradient subsequently used for ATP formation. The polypeptide is Photosystem II CP47 reaction center protein (Anthoceros angustus (Hornwort)).